The following is a 542-amino-acid chain: Probable serine/threonine-protein kinase ndrB (542 aa).

The interval 1–52 (MNVERKLESLSLQQQQQEEQQDESEQPNQGVEDEEEEEYDEEEYEEEEEDIN) is disordered. Residues 9–18 (SLSLQQQQQE) show a composition bias toward low complexity. A compositionally biased stretch (acidic residues) spans 19-51 (EQQDESEQPNQGVEDEEEEEYDEEEYEEEEEDI). The region spanning 130-437 (FESIRIIGRG…VEEIQSHPFF (308 aa)) is the Protein kinase domain. ATP-binding positions include 136–144 (IGRGAFGEV) and Lys159. Catalysis depends on Asp258, which acts as the Proton acceptor. The 73-residue stretch at 438 to 510 (KGVDWRRLRE…RNFDAMRDAF (73 aa)) folds into the AGC-kinase C-terminal domain. The tract at residues 452 to 486 (IIPQLSSPTDTSNFDHYEEEQQPEPMQPVQSKSRR) is disordered. Residues 455-465 (QLSSPTDTSNF) are compositionally biased toward polar residues.

Belongs to the protein kinase superfamily. AGC Ser/Thr protein kinase family.

It localises to the cytoplasm. It carries out the reaction L-seryl-[protein] + ATP = O-phospho-L-seryl-[protein] + ADP + H(+). The enzyme catalyses L-threonyl-[protein] + ATP = O-phospho-L-threonyl-[protein] + ADP + H(+). This is Probable serine/threonine-protein kinase ndrB (ndrB) from Dictyostelium discoideum (Social amoeba).